We begin with the raw amino-acid sequence, 193 residues long: Acyl carrier protein phosphodiesterase (193 aa).

Belongs to the AcpH family.

The enzyme catalyses holo-[ACP] + H2O = apo-[ACP] + (R)-4'-phosphopantetheine + H(+). Functionally, converts holo-ACP to apo-ACP by hydrolytic cleavage of the phosphopantetheine prosthetic group from ACP. The polypeptide is Acyl carrier protein phosphodiesterase (Klebsiella pneumoniae subsp. pneumoniae (strain ATCC 700721 / MGH 78578)).